Here is a 281-residue protein sequence, read N- to C-terminus: Cytochrome c oxidase subunit 3 (281 aa).

7 helical membrane-spanning segments follow: residues 34 to 54, 59 to 79, 103 to 123, 148 to 168, 179 to 199, 220 to 240, and 259 to 279; these read PWPI…VMTF, NGLF…TLWF, GFVL…WAFF, WEVP…VTYA, VIYG…FQGF, ATGF…VGLF, and ILYW…VYWW.

It belongs to the cytochrome c oxidase subunit 3 family. Component of the cytochrome c oxidase (complex IV, CIV), a multisubunit enzyme composed of a catalytic core of 3 subunits and several supernumerary subunits. The complex exists as a monomer or a dimer and forms supercomplexes (SCs) in the inner mitochondrial membrane with ubiquinol-cytochrome c oxidoreductase (cytochrome b-c1 complex, complex III, CIII).

It localises to the mitochondrion inner membrane. It catalyses the reaction 4 Fe(II)-[cytochrome c] + O2 + 8 H(+)(in) = 4 Fe(III)-[cytochrome c] + 2 H2O + 4 H(+)(out). Its function is as follows. Component of the cytochrome c oxidase, the last enzyme in the mitochondrial electron transport chain which drives oxidative phosphorylation. The respiratory chain contains 3 multisubunit complexes succinate dehydrogenase (complex II, CII), ubiquinol-cytochrome c oxidoreductase (cytochrome b-c1 complex, complex III, CIII) and cytochrome c oxidase (complex IV, CIV), that cooperate to transfer electrons derived from NADH and succinate to molecular oxygen, creating an electrochemical gradient over the inner membrane that drives transmembrane transport and the ATP synthase. Cytochrome c oxidase is the component of the respiratory chain that catalyzes the reduction of oxygen to water. Electrons originating from reduced cytochrome c in the intermembrane space (IMS) are transferred via the dinuclear copper A center (CU(A)) of subunit 2 and heme A of subunit 1 to the active site in subunit 1, a binuclear center (BNC) formed by heme A3 and copper B (CU(B)). The BNC reduces molecular oxygen to 2 water molecules using 4 electrons from cytochrome c in the IMS and 4 protons from the mitochondrial matrix. This Rhizopus stolonifer (Rhizopus nigricans) protein is Cytochrome c oxidase subunit 3 (COX3).